We begin with the raw amino-acid sequence, 168 residues long: Photosystem I assembly protein Ycf3 (168 aa).

TPR repeat units lie at residues 35–68 (AFTY…EMDP), 72–105 (SYIL…NPFL), and 120–153 (GEQA…TPGN).

This sequence belongs to the Ycf3 family.

The protein resides in the plastid. The protein localises to the chloroplast thylakoid membrane. In terms of biological role, essential for the assembly of the photosystem I (PSI) complex. May act as a chaperone-like factor to guide the assembly of the PSI subunits. This chain is Photosystem I assembly protein Ycf3, found in Pelargonium hortorum (Common geranium).